The chain runs to 251 residues: Imidazole glycerol phosphate synthase subunit HisF (251 aa).

Catalysis depends on residues aspartate 11 and aspartate 130.

Belongs to the HisA/HisF family. Heterodimer of HisH and HisF.

It is found in the cytoplasm. The enzyme catalyses 5-[(5-phospho-1-deoxy-D-ribulos-1-ylimino)methylamino]-1-(5-phospho-beta-D-ribosyl)imidazole-4-carboxamide + L-glutamine = D-erythro-1-(imidazol-4-yl)glycerol 3-phosphate + 5-amino-1-(5-phospho-beta-D-ribosyl)imidazole-4-carboxamide + L-glutamate + H(+). It functions in the pathway amino-acid biosynthesis; L-histidine biosynthesis; L-histidine from 5-phospho-alpha-D-ribose 1-diphosphate: step 5/9. Its function is as follows. IGPS catalyzes the conversion of PRFAR and glutamine to IGP, AICAR and glutamate. The HisF subunit catalyzes the cyclization activity that produces IGP and AICAR from PRFAR using the ammonia provided by the HisH subunit. The protein is Imidazole glycerol phosphate synthase subunit HisF of Thiobacillus denitrificans (strain ATCC 25259 / T1).